The chain runs to 394 residues: Tryptophan synthase beta chain (394 aa).

Residue Lys90 is modified to N6-(pyridoxal phosphate)lysine.

This sequence belongs to the TrpB family. As to quaternary structure, tetramer of two alpha and two beta chains. The cofactor is pyridoxal 5'-phosphate.

The catalysed reaction is (1S,2R)-1-C-(indol-3-yl)glycerol 3-phosphate + L-serine = D-glyceraldehyde 3-phosphate + L-tryptophan + H2O. The protein operates within amino-acid biosynthesis; L-tryptophan biosynthesis; L-tryptophan from chorismate: step 5/5. Functionally, the beta subunit is responsible for the synthesis of L-tryptophan from indole and L-serine. This chain is Tryptophan synthase beta chain, found in Parabacteroides distasonis (strain ATCC 8503 / DSM 20701 / CIP 104284 / JCM 5825 / NCTC 11152).